Here is a 399-residue protein sequence, read N- to C-terminus: Na(+)/H(+) antiporter NhaA (399 aa).

Helical transmembrane passes span 12-32 (LDIA…IAAN), 60-80 (LLLW…GLEI), 94-114 (LAAL…LIYA), 126-146 (GWAI…TLLG), 155-175 (IFLT…IAFF), 178-198 (ASLS…LIGL), 206-226 (LWPY…SGVH), 263-283 (PWVT…VSLA), 284-304 (GLPP…GLFL), 336-356 (GVAL…TLAF), and 372-392 (LGVL…LRLS).

Belongs to the NhaA Na(+)/H(+) (TC 2.A.33) antiporter family.

Its subcellular location is the cell inner membrane. It catalyses the reaction Na(+)(in) + 2 H(+)(out) = Na(+)(out) + 2 H(+)(in). In terms of biological role, na(+)/H(+) antiporter that extrudes sodium in exchange for external protons. This Rhodospirillum rubrum (strain ATCC 11170 / ATH 1.1.1 / DSM 467 / LMG 4362 / NCIMB 8255 / S1) protein is Na(+)/H(+) antiporter NhaA.